A 71-amino-acid polypeptide reads, in one-letter code: DNA-directed RNA polymerase subunit epsilon (71 aa).

The protein belongs to the RNA polymerase subunit epsilon family. In terms of assembly, RNAP is composed of a core of 2 alpha, a beta and a beta' subunit. The core is associated with a delta subunit, and at least one of epsilon or omega. When a sigma factor is associated with the core the holoenzyme is formed, which can initiate transcription.

It catalyses the reaction RNA(n) + a ribonucleoside 5'-triphosphate = RNA(n+1) + diphosphate. A non-essential component of RNA polymerase (RNAP). This Geobacillus kaustophilus (strain HTA426) protein is DNA-directed RNA polymerase subunit epsilon.